A 529-amino-acid chain; its full sequence is Bifunctional purine biosynthesis protein PurH (529 aa).

Positions Thr2–Thr149 constitute an MGS-like domain.

This sequence belongs to the PurH family.

The enzyme catalyses (6R)-10-formyltetrahydrofolate + 5-amino-1-(5-phospho-beta-D-ribosyl)imidazole-4-carboxamide = 5-formamido-1-(5-phospho-D-ribosyl)imidazole-4-carboxamide + (6S)-5,6,7,8-tetrahydrofolate. The catalysed reaction is IMP + H2O = 5-formamido-1-(5-phospho-D-ribosyl)imidazole-4-carboxamide. It functions in the pathway purine metabolism; IMP biosynthesis via de novo pathway; 5-formamido-1-(5-phospho-D-ribosyl)imidazole-4-carboxamide from 5-amino-1-(5-phospho-D-ribosyl)imidazole-4-carboxamide (10-formyl THF route): step 1/1. The protein operates within purine metabolism; IMP biosynthesis via de novo pathway; IMP from 5-formamido-1-(5-phospho-D-ribosyl)imidazole-4-carboxamide: step 1/1. The chain is Bifunctional purine biosynthesis protein PurH from Dinoroseobacter shibae (strain DSM 16493 / NCIMB 14021 / DFL 12).